Consider the following 61-residue polypeptide: Metallothionein-1B (61 aa).

A beta region spans residues 1-29; it reads MDPNCSCVAGESCTCAGSCKCKQCRCASC. The a divalent metal cation site is built by C5, C7, C13, C15, C19, C21, C24, C26, C29, C33, C34, C36, C37, C41, C44, C48, C50, C57, C59, and C60. Residues 30-61 are alpha; that stretch reads KKSCCSCCPVGCAKCAQGCVCKGASDKCSCCA.

This sequence belongs to the metallothionein superfamily. Type 1 family.

Metallothioneins have a high content of cysteine residues that bind various heavy metals; these proteins are transcriptionally regulated by both heavy metals and glucocorticoids. In Equus caballus (Horse), this protein is Metallothionein-1B.